A 735-amino-acid chain; its full sequence is Probable ATP-dependent RNA helicase DHR2 (735 aa).

A compositionally biased stretch (polar residues) spans 1–13 (MAANSNSRVASNH). The interval 1-29 (MAANSNSRVASNHTSKKQKVRRNIHPFTN) is disordered. Residues 14–24 (TSKKQKVRRNI) are compositionally biased toward basic residues. A Helicase ATP-binding domain is found at 91–257 (MSYIESNPVT…FNNAPILFVE (167 aa)). Position 104-111 (104-111 (GETGSGKS)) interacts with ATP. The DEAH box motif lies at 203–206 (DEAH). Residues 262-456 (DVKQYYLKAP…SPVLMLKRYG (195 aa)) form the Helicase C-terminal domain.

The protein belongs to the DEAD box helicase family. DEAH subfamily. Interacts with NOP19. Interacts with UBP10.

It localises to the nucleus. The protein localises to the nucleolus. It catalyses the reaction ATP + H2O = ADP + phosphate + H(+). In terms of biological role, probable ATP-binding RNA helicase. Required for 18S rRNA synthesis. In Saccharomyces cerevisiae (strain ATCC 204508 / S288c) (Baker's yeast), this protein is Probable ATP-dependent RNA helicase DHR2 (DHR2).